A 108-amino-acid chain; its full sequence is Vacuolar ATPase assembly integral membrane protein VMA21 (108 aa).

At Met1–Ser34 the chain is on the cytoplasmic side. The chain crosses the membrane as a helical span at residues Val35–Phe55. At Gly56 to Tyr68 the chain is on the lumenal side. The chain crosses the membrane as a helical span at residues Ala69–Ala89. At Arg90–Glu108 the chain is on the cytoplasmic side.

Belongs to the VMA21 family.

It localises to the endoplasmic reticulum membrane. Its subcellular location is the endoplasmic reticulum-Golgi intermediate compartment membrane. It is found in the cytoplasmic vesicle. The protein localises to the COPII-coated vesicle membrane. In terms of biological role, required for the assembly of the V0 complex of the vacuolar ATPase (V-ATPase) in the endoplasmic reticulum. In Ajellomyces capsulatus (strain NAm1 / WU24) (Darling's disease fungus), this protein is Vacuolar ATPase assembly integral membrane protein VMA21.